A 348-amino-acid chain; its full sequence is Ion-translocating oxidoreductase complex subunit D (348 aa).

3 helical membrane passes run 25–45 (ILAA…GTFI), 68–88 (PISP…IGVA), and 124–144 (AMAA…TWAA). Thr182 carries the post-translational modification FMN phosphoryl threonine. Transmembrane regions (helical) follow at residues 211 to 231 (TGEG…FLLA), 237 to 257 (WHIS…GFGA), 263 to 283 (ASPL…FIAT), 296 to 316 (LLFG…GGYP), and 317 to 337 (DGVA…DYYI).

This sequence belongs to the NqrB/RnfD family. In terms of assembly, the complex is composed of six subunits: RnfA, RnfB, RnfC, RnfD, RnfE and RnfG. It depends on FMN as a cofactor.

The protein localises to the cell inner membrane. In terms of biological role, part of a membrane-bound complex that couples electron transfer with translocation of ions across the membrane. This Shewanella amazonensis (strain ATCC BAA-1098 / SB2B) protein is Ion-translocating oxidoreductase complex subunit D.